The sequence spans 343 residues: 4-hydroxyproline 2-epimerase 1 (343 aa).

The Proton acceptor role is filled by S90. Residues 91-92 (GS), D251, and 256-257 (GT) each bind substrate.

Belongs to the proline racemase family.

The catalysed reaction is trans-4-hydroxy-L-proline = cis-4-hydroxy-D-proline. Catalyzes the epimerization of trans-4-hydroxy-L-proline (t4LHyp) to cis-4-hydroxy-D-proline (c4DHyp) in vitro, albeit with low efficiency. The physiological substrate may be different. Displays no proline racemase activity. The polypeptide is 4-hydroxyproline 2-epimerase 1 (Brucella anthropi (strain ATCC 49188 / DSM 6882 / CCUG 24695 / JCM 21032 / LMG 3331 / NBRC 15819 / NCTC 12168 / Alc 37) (Ochrobactrum anthropi)).